We begin with the raw amino-acid sequence, 289 residues long: ATP synthase gamma chain (289 aa).

Belongs to the ATPase gamma chain family. As to quaternary structure, F-type ATPases have 2 components, CF(1) - the catalytic core - and CF(0) - the membrane proton channel. CF(1) has five subunits: alpha(3), beta(3), gamma(1), delta(1), epsilon(1). CF(0) has three main subunits: a, b and c.

It localises to the cell inner membrane. Its function is as follows. Produces ATP from ADP in the presence of a proton gradient across the membrane. The gamma chain is believed to be important in regulating ATPase activity and the flow of protons through the CF(0) complex. This Coxiella burnetii (strain CbuK_Q154) (Coxiella burnetii (strain Q154)) protein is ATP synthase gamma chain.